Here is a 556-residue protein sequence, read N- to C-terminus: Dihydroxy-acid dehydratase (556 aa).

Cys-47 lines the [2Fe-2S] cluster pocket. Residue Asp-79 participates in Mg(2+) binding. Cys-120 contacts [2Fe-2S] cluster. Mg(2+) is bound by residues Asp-121 and Lys-122. Lys-122 bears the N6-carboxylysine mark. A [2Fe-2S] cluster-binding site is contributed by Cys-192. A Mg(2+)-binding site is contributed by Glu-444. The active-site Proton acceptor is the Ser-470.

The protein belongs to the IlvD/Edd family. As to quaternary structure, homodimer. Requires [2Fe-2S] cluster as cofactor. The cofactor is Mg(2+).

The catalysed reaction is (2R)-2,3-dihydroxy-3-methylbutanoate = 3-methyl-2-oxobutanoate + H2O. It carries out the reaction (2R,3R)-2,3-dihydroxy-3-methylpentanoate = (S)-3-methyl-2-oxopentanoate + H2O. The protein operates within amino-acid biosynthesis; L-isoleucine biosynthesis; L-isoleucine from 2-oxobutanoate: step 3/4. It participates in amino-acid biosynthesis; L-valine biosynthesis; L-valine from pyruvate: step 3/4. Its function is as follows. Functions in the biosynthesis of branched-chain amino acids. Catalyzes the dehydration of (2R,3R)-2,3-dihydroxy-3-methylpentanoate (2,3-dihydroxy-3-methylvalerate) into 2-oxo-3-methylpentanoate (2-oxo-3-methylvalerate) and of (2R)-2,3-dihydroxy-3-methylbutanoate (2,3-dihydroxyisovalerate) into 2-oxo-3-methylbutanoate (2-oxoisovalerate), the penultimate precursor to L-isoleucine and L-valine, respectively. The polypeptide is Dihydroxy-acid dehydratase (Prochlorococcus marinus (strain MIT 9313)).